Consider the following 101-residue polypeptide: C-X-C motif chemokine 3 (101 aa).

An N-terminal signal peptide occupies residues 1–32 (MAPPTRRLLNAALLLLLLLMATSHQPSGTVVA). Cystine bridges form between C37/C63 and C39/C79.

This sequence belongs to the intercrine alpha (chemokine CxC) family.

It localises to the secreted. Its function is as follows. Ligand for CXCR2. Has chemotactic activity for neutrophils. May play a role in inflammation and exert its effects on endothelial cells in an autocrine fashion. In Rattus norvegicus (Rat), this protein is C-X-C motif chemokine 3 (Cxcl3).